The primary structure comprises 656 residues: Spermatogenesis-associated protein 13 (656 aa).

The segment covering 1–12 has biased composition (polar residues); that stretch reads MHPASVTTTSQD. The disordered stretch occupies residues 1 to 26; sequence MHPASVTTTSQDPCAPSGSCRGGRRR. Phosphoserine is present on serine 82. Positions 85-115 are disordered; that stretch reads IGLDRVGRRRQMKTSNVSSDGGAESSALVDD. Residues 102–154 form an ABR (APC-binding region) domain region; sequence SSDGGAESSALVDDNGSEEDFSYEELCQANPRYLQPGGEQLAINELISDGSVV. Serine 118 bears the Phosphoserine mark. The region spanning 151 to 210 is the SH3 domain; sequence GSVVCAEALWDHVTMDDQELGFKAGDVIQVLEASNKDWWWGRNEDKEAWFPASFVRLRVN. The interval 215–242 is disordered; it reads PENCSSSHGEEQDEDTSKARHKHPESQQ. In terms of domain architecture, DH spans 244 to 428; sequence MRTNVIQEIM…KNVACLINER (185 aa). The PH domain occupies 459–565; sequence ELIHSGELTK…WLQAYADERR (107 aa). The interval 565–656 is C-terminal tail; that stretch reads RRVQEDQQMG…TFHKLTPFRK (92 aa).

As to quaternary structure, interacts (via ABR and SH3 domain) with APC. The binding of APC enhances its GEF activity by relieving it from an autoinhibitory conformation, in which the ABR and SH3 domains are associated with the C-terminal tail. Interacts (via C-terminal tail) with PPP1R9B (via C-terminus). Interacts with RAC1. In terms of tissue distribution, expression is aberrantly enhanced in most colorectal tumors.

Its subcellular location is the cytoplasm. It localises to the cell projection. It is found in the filopodium. The protein localises to the lamellipodium. The protein resides in the ruffle membrane. Its subcellular location is the podosome. Both the ABR and the SH3 domains contribute to maintaining the protein in an inhibited conformation by associating with the C-terminal tail. Binding of these domains to the C-terminal tail inhibits the activity of the protein by blocking a region that is required for its GEF activity. Functionally, acts as a guanine nucleotide exchange factor (GEF) for RHOA, RAC1 and CDC42 GTPases. Regulates cell migration and adhesion assembly and disassembly through a RAC1, PI3K, RHOA and AKT1-dependent mechanism. Increases both RAC1 and CDC42 activity, but decreases the amount of active RHOA. Required for MMP9 up-regulation via the JNK signaling pathway in colorectal tumor cells. Involved in tumor angiogenesis and may play a role in intestinal adenoma formation and tumor progression. The polypeptide is Spermatogenesis-associated protein 13 (Spata13) (Mus musculus (Mouse)).